Consider the following 244-residue polypeptide: 3-deoxy-manno-octulosonate cytidylyltransferase (244 aa).

It belongs to the KdsB family.

The protein localises to the cytoplasm. The enzyme catalyses 3-deoxy-alpha-D-manno-oct-2-ulosonate + CTP = CMP-3-deoxy-beta-D-manno-octulosonate + diphosphate. It participates in nucleotide-sugar biosynthesis; CMP-3-deoxy-D-manno-octulosonate biosynthesis; CMP-3-deoxy-D-manno-octulosonate from 3-deoxy-D-manno-octulosonate and CTP: step 1/1. The protein operates within bacterial outer membrane biogenesis; lipopolysaccharide biosynthesis. Activates KDO (a required 8-carbon sugar) for incorporation into bacterial lipopolysaccharide in Gram-negative bacteria. The sequence is that of 3-deoxy-manno-octulosonate cytidylyltransferase from Rickettsia bellii (strain OSU 85-389).